A 237-amino-acid chain; its full sequence is Phosphoribosylaminoimidazole-succinocarboxamide synthase (237 aa).

Belongs to the SAICAR synthetase family.

It catalyses the reaction 5-amino-1-(5-phospho-D-ribosyl)imidazole-4-carboxylate + L-aspartate + ATP = (2S)-2-[5-amino-1-(5-phospho-beta-D-ribosyl)imidazole-4-carboxamido]succinate + ADP + phosphate + 2 H(+). Its pathway is purine metabolism; IMP biosynthesis via de novo pathway; 5-amino-1-(5-phospho-D-ribosyl)imidazole-4-carboxamide from 5-amino-1-(5-phospho-D-ribosyl)imidazole-4-carboxylate: step 1/2. The protein is Phosphoribosylaminoimidazole-succinocarboxamide synthase of Pseudomonas fluorescens (strain Pf0-1).